Reading from the N-terminus, the 246-residue chain is Pyridoxine 5'-phosphate synthase (246 aa).

Residue asparagine 12 coordinates 3-amino-2-oxopropyl phosphate. 14–15 (DH) provides a ligand contact to 1-deoxy-D-xylulose 5-phosphate. Arginine 23 contributes to the 3-amino-2-oxopropyl phosphate binding site. Histidine 48 (proton acceptor) is an active-site residue. Residues arginine 50 and histidine 55 each coordinate 1-deoxy-D-xylulose 5-phosphate. Glutamate 75 (proton acceptor) is an active-site residue. 1-deoxy-D-xylulose 5-phosphate is bound at residue threonine 105. Catalysis depends on histidine 196, which acts as the Proton donor. 3-amino-2-oxopropyl phosphate-binding positions include glycine 197 and 218–219 (GH).

The protein belongs to the PNP synthase family. Homooctamer; tetramer of dimers.

The protein resides in the cytoplasm. The enzyme catalyses 3-amino-2-oxopropyl phosphate + 1-deoxy-D-xylulose 5-phosphate = pyridoxine 5'-phosphate + phosphate + 2 H2O + H(+). It participates in cofactor biosynthesis; pyridoxine 5'-phosphate biosynthesis; pyridoxine 5'-phosphate from D-erythrose 4-phosphate: step 5/5. Functionally, catalyzes the complicated ring closure reaction between the two acyclic compounds 1-deoxy-D-xylulose-5-phosphate (DXP) and 3-amino-2-oxopropyl phosphate (1-amino-acetone-3-phosphate or AAP) to form pyridoxine 5'-phosphate (PNP) and inorganic phosphate. In Pseudomonas putida (strain GB-1), this protein is Pyridoxine 5'-phosphate synthase.